Consider the following 324-residue polypeptide: Adenine deaminase (324 aa).

Zn(2+)-binding residues include His-11, His-13, and His-189. The active-site Proton donor is the Glu-192. Asp-270 lines the Zn(2+) pocket. Asp-271 lines the substrate pocket.

Belongs to the metallo-dependent hydrolases superfamily. Adenosine and AMP deaminases family. Adenine deaminase type 2 subfamily. It depends on Zn(2+) as a cofactor.

The catalysed reaction is adenine + H2O + H(+) = hypoxanthine + NH4(+). Catalyzes the hydrolytic deamination of adenine to hypoxanthine. Plays an important role in the purine salvage pathway and in nitrogen catabolism. The chain is Adenine deaminase from Rhizobium meliloti (strain 1021) (Ensifer meliloti).